We begin with the raw amino-acid sequence, 600 residues long: Mitoguardin 1 (600 aa).

2 helical membrane passes run 15 to 32 (TYAV…YSLS) and 38 to 58 (PVAK…IFLA). 2 positions are modified to phosphoserine: S257 and S261.

It belongs to the mitoguardin family. As to quaternary structure, homodimer and heterodimer; forms heterodimers with MIGA2. Interacts with PLD6/MitoPLD.

It localises to the mitochondrion outer membrane. In terms of biological role, regulator of mitochondrial fusion. Acts by forming homo- and heterodimers at the mitochondrial outer membrane and facilitating the formation of PLD6/MitoPLD dimers. May act by regulating phospholipid metabolism via PLD6/MitoPLD. The chain is Mitoguardin 1 from Mus musculus (Mouse).